The sequence spans 564 residues: 5-aminolevulinate synthase, mitochondrial (564 aa).

The N-terminal 57 residues, M1 to Y57, are a transit peptide targeting the mitochondrion. Residues R113, S226, and K245 each coordinate substrate. Residues S278, H306, and T350 each contribute to the pyridoxal 5'-phosphate site. K353 is a catalytic residue. Residue K353 is modified to N6-(pyridoxal phosphate)lysine. Pyridoxal 5'-phosphate-binding residues include T382 and T383. A substrate-binding site is contributed by T468.

The protein belongs to the class-II pyridoxal-phosphate-dependent aminotransferase family. Homodimer. It depends on pyridoxal 5'-phosphate as a cofactor.

The protein localises to the mitochondrion matrix. It carries out the reaction succinyl-CoA + glycine + H(+) = 5-aminolevulinate + CO2 + CoA. The protein operates within porphyrin-containing compound metabolism; protoporphyrin-IX biosynthesis; 5-aminolevulinate from glycine: step 1/1. In terms of biological role, catalyzes the synthesis of 5-aminolevulinate (ALA) from succinyl-CoA and glycine, the first and rate-limiting step in heme biosynthesis. This is 5-aminolevulinate synthase, mitochondrial (HEM1) from Candida albicans (strain SC5314 / ATCC MYA-2876) (Yeast).